The chain runs to 94 residues: Small ribosomal subunit protein bS18 (94 aa).

The protein belongs to the bacterial ribosomal protein bS18 family. As to quaternary structure, part of the 30S ribosomal subunit. Forms a tight heterodimer with protein bS6.

Its function is as follows. Binds as a heterodimer with protein bS6 to the central domain of the 16S rRNA, where it helps stabilize the platform of the 30S subunit. The polypeptide is Small ribosomal subunit protein bS18 (Polaromonas sp. (strain JS666 / ATCC BAA-500)).